We begin with the raw amino-acid sequence, 370 residues long: Quinolinate synthase (370 aa).

Residues His62 and Ser83 each coordinate iminosuccinate. Cys128 serves as a coordination point for [4Fe-4S] cluster. Iminosuccinate contacts are provided by residues 154-156 and Ser171; that span reads YAN. A [4Fe-4S] cluster-binding site is contributed by Cys215. Residues 241 to 243 and Thr258 each bind iminosuccinate; that span reads HPE. Cys312 provides a ligand contact to [4Fe-4S] cluster.

Belongs to the quinolinate synthase family. Type 1 subfamily. [4Fe-4S] cluster serves as cofactor.

The protein localises to the cytoplasm. It carries out the reaction iminosuccinate + dihydroxyacetone phosphate = quinolinate + phosphate + 2 H2O + H(+). Its pathway is cofactor biosynthesis; NAD(+) biosynthesis; quinolinate from iminoaspartate: step 1/1. Functionally, catalyzes the condensation of iminoaspartate with dihydroxyacetone phosphate to form quinolinate. This is Quinolinate synthase from Neisseria meningitidis serogroup C (strain 053442).